Consider the following 310-residue polypeptide: Upstream stimulatory factor 1 (310 aa).

The segment covering 1–17 (MKGQQKTAETEEGTVQI) has biased composition (polar residues). Disordered regions lie at residues 1 to 26 (MKGQ…ATGE) and 171 to 209 (QGGS…EVER). A compositionally biased stretch (basic and acidic residues) spans 190–209 (EAPRTTRDEKRRAQHNEVER). The bHLH domain maps to 199 to 254 (KRRAQHNEVERRRRDKINNWIVQLSKIIPDCSMESTKSGQSKGGILSKACDYIQEL). The tract at residues 271 to 292 (LQLDNDVLRQQVEDLKNKNLLL) is leucine-zipper. Residue lysine 306 forms a Glycyl lysine isopeptide (Lys-Gly) (interchain with G-Cter in SUMO2) linkage.

Efficient DNA binding requires dimerization with another bHLH protein. Binds DNA as a homodimer or a heterodimer (USF1/USF2).

The protein resides in the nucleus. Functionally, transcription factor that binds to a symmetrical DNA sequence (E-boxes) (5'-CACGTG-3') that is found in a variety of viral and cellular promoters. This is Upstream stimulatory factor 1 (USF1) from Bos taurus (Bovine).